A 90-amino-acid polypeptide reads, in one-letter code: Defensin-like protein 293 (90 aa).

The N-terminal stretch at 1-26 (MTSRAKSLFIFFFLISCTFMLLETDA) is a signal peptide. Intrachain disulfides connect Cys63/Cys83, Cys69/Cys88, and Cys75/Cys90.

It belongs to the DEFL family.

It is found in the secreted. In Arabidopsis thaliana (Mouse-ear cress), this protein is Defensin-like protein 293.